The sequence spans 663 residues: Transketolase 2 (663 aa).

A substrate-binding site is contributed by His-25. Residues His-65 and 113–115 (GPL) contribute to the thiamine diphosphate site. Asp-154 is a binding site for Mg(2+). The thiamine diphosphate site is built by Gly-155 and Asn-184. Residues Asn-184 and Ile-186 each contribute to the Mg(2+) site. Substrate is bound by residues His-259, Arg-356, and Ser-383. His-259 provides a ligand contact to thiamine diphosphate. Catalysis depends on Glu-410, which acts as the Proton donor. Phe-436 lines the thiamine diphosphate pocket. Substrate-binding residues include His-460, Asp-468, and Arg-519.

The protein belongs to the transketolase family. In terms of assembly, homodimer. Mg(2+) is required as a cofactor. It depends on Ca(2+) as a cofactor. Requires Mn(2+) as cofactor. The cofactor is Co(2+). Thiamine diphosphate serves as cofactor.

It catalyses the reaction D-sedoheptulose 7-phosphate + D-glyceraldehyde 3-phosphate = aldehydo-D-ribose 5-phosphate + D-xylulose 5-phosphate. In terms of biological role, catalyzes the transfer of a two-carbon ketol group from a ketose donor to an aldose acceptor, via a covalent intermediate with the cofactor thiamine pyrophosphate. This is Transketolase 2 (tkt2) from Aliivibrio fischeri (strain ATCC 700601 / ES114) (Vibrio fischeri).